Here is a 360-residue protein sequence, read N- to C-terminus: Phosphate acyltransferase (360 aa).

Belongs to the PlsX family. As to quaternary structure, homodimer. Probably interacts with PlsY.

Its subcellular location is the cytoplasm. The enzyme catalyses a fatty acyl-[ACP] + phosphate = an acyl phosphate + holo-[ACP]. The protein operates within lipid metabolism; phospholipid metabolism. Catalyzes the reversible formation of acyl-phosphate (acyl-PO(4)) from acyl-[acyl-carrier-protein] (acyl-ACP). This enzyme utilizes acyl-ACP as fatty acyl donor, but not acyl-CoA. The chain is Phosphate acyltransferase from Thermobifida fusca (strain YX).